The primary structure comprises 64 residues: Alpha-toxin Amm5 (64 aa).

Residues 2-64 (KDGYIIDDLN…VSIKEKGRCN (63 aa)) enclose the LCN-type CS-alpha/beta domain. 4 disulfides stabilise this stretch: cysteine 12–cysteine 63, cysteine 16–cysteine 36, cysteine 22–cysteine 46, and cysteine 26–cysteine 48. Asparagine 64 carries the post-translational modification Asparagine amide.

As to expression, expressed by the venom gland.

It is found in the secreted. Its function is as follows. Alpha toxins bind voltage-independently at site-3 of sodium channels (Nav) and inhibit the inactivation of the activated channels, thereby blocking neuronal transmission. In Androctonus mauritanicus mauritanicus (Scorpion), this protein is Alpha-toxin Amm5.